Reading from the N-terminus, the 146-residue chain is LQYIERLDPEREPGRLTFIVRMGADKIRDKLPELVERSPPPATVAWITDPMHGNTYEAAPVHKTRRFDDVLDEVKGFFEVHKSLGTHPGGIHVELTGDDVTECVGGGDEIFVDDLHQRYETACDPRLNRSQSLDLAFLVAEMYRDQ.

It belongs to the class-II DAHP synthase family. As to quaternary structure, homodimer.

It carries out the reaction D-erythrose 4-phosphate + phosphoenolpyruvate + H2O = 7-phospho-2-dehydro-3-deoxy-D-arabino-heptonate + phosphate. It functions in the pathway metabolic intermediate biosynthesis; chorismate biosynthesis; chorismate from D-erythrose 4-phosphate and phosphoenolpyruvate: step 1/7. The sequence is that of Phospho-2-dehydro-3-deoxyheptonate aldolase from Streptomyces lividans.